The primary structure comprises 477 residues: Tyrosine-protein kinase transforming protein Fes (477 aa).

Positions 49–76 (GEPPPVLLLQDDRHSTSSSEQEREGGRT) are disordered. Basic and acidic residues predominate over residues 58–74 (QDDRHSTSSSEQEREGG). Residues 115-204 (WYHGALPRAE…KSGIVLNRAV (90 aa)) enclose the SH2 domain. Residues 216–477 (LVLGEQIGRG…ELQSIRKRHR (262 aa)) form the Protein kinase domain. ATP-binding positions include 222 to 230 (IGRGNFGEV) and Lys245. Asp338 serves as the catalytic Proton acceptor. Phosphotyrosine; by autocatalysis is present on Tyr368.

It belongs to the protein kinase superfamily. Tyr protein kinase family. Fes/fps subfamily.

It carries out the reaction L-tyrosyl-[protein] + ATP = O-phospho-L-tyrosyl-[protein] + ADP + H(+). This is Tyrosine-protein kinase transforming protein Fes (V-FES) from Feline sarcoma virus (strain Snyder-Theilen).